Reading from the N-terminus, the 276-residue chain is Sulfur carrier protein FdhD (276 aa).

Cys-122 functions as the Cysteine persulfide intermediate in the catalytic mechanism. A Mo-bis(molybdopterin guanine dinucleotide)-binding site is contributed by 259–264 (FCRRGR).

The protein belongs to the FdhD family.

The protein localises to the cytoplasm. In terms of biological role, required for formate dehydrogenase (FDH) activity. Acts as a sulfur carrier protein that transfers sulfur from IscS to the molybdenum cofactor prior to its insertion into FDH. The sequence is that of Sulfur carrier protein FdhD from Proteus mirabilis (strain HI4320).